A 448-amino-acid polypeptide reads, in one-letter code: Bifunctional protein GlmU (448 aa).

The tract at residues 1–232 (MSERSLLVVV…VDEVAGVNSR (232 aa)) is pyrophosphorylase. UDP-N-acetyl-alpha-D-glucosamine-binding positions include 11 to 14 (LAAG), K25, Q78, and 83 to 84 (GT). Position 108 (D108) interacts with Mg(2+). UDP-N-acetyl-alpha-D-glucosamine is bound by residues G144, E158, N173, and N230. N230 serves as a coordination point for Mg(2+). Residues 233 to 253 (LQLAEAEAILQGRLRRAAMAG) are linker. An N-acetyltransferase region spans residues 254–448 (GATLVAPETV…LRAARGKPKV (195 aa)). The UDP-N-acetyl-alpha-D-glucosamine site is built by R319 and K337. The active-site Proton acceptor is the H349. Residues Y352 and N363 each contribute to the UDP-N-acetyl-alpha-D-glucosamine site. Acetyl-CoA is bound by residues A366, 372–373 (NY), S409, and R426.

It in the N-terminal section; belongs to the N-acetylglucosamine-1-phosphate uridyltransferase family. In the C-terminal section; belongs to the transferase hexapeptide repeat family. As to quaternary structure, homotrimer. Mg(2+) is required as a cofactor.

It is found in the cytoplasm. The catalysed reaction is alpha-D-glucosamine 1-phosphate + acetyl-CoA = N-acetyl-alpha-D-glucosamine 1-phosphate + CoA + H(+). It catalyses the reaction N-acetyl-alpha-D-glucosamine 1-phosphate + UTP + H(+) = UDP-N-acetyl-alpha-D-glucosamine + diphosphate. The protein operates within nucleotide-sugar biosynthesis; UDP-N-acetyl-alpha-D-glucosamine biosynthesis; N-acetyl-alpha-D-glucosamine 1-phosphate from alpha-D-glucosamine 6-phosphate (route II): step 2/2. It functions in the pathway nucleotide-sugar biosynthesis; UDP-N-acetyl-alpha-D-glucosamine biosynthesis; UDP-N-acetyl-alpha-D-glucosamine from N-acetyl-alpha-D-glucosamine 1-phosphate: step 1/1. Its pathway is bacterial outer membrane biogenesis; LPS lipid A biosynthesis. Functionally, catalyzes the last two sequential reactions in the de novo biosynthetic pathway for UDP-N-acetylglucosamine (UDP-GlcNAc). The C-terminal domain catalyzes the transfer of acetyl group from acetyl coenzyme A to glucosamine-1-phosphate (GlcN-1-P) to produce N-acetylglucosamine-1-phosphate (GlcNAc-1-P), which is converted into UDP-GlcNAc by the transfer of uridine 5-monophosphate (from uridine 5-triphosphate), a reaction catalyzed by the N-terminal domain. This is Bifunctional protein GlmU from Azorhizobium caulinodans (strain ATCC 43989 / DSM 5975 / JCM 20966 / LMG 6465 / NBRC 14845 / NCIMB 13405 / ORS 571).